The sequence spans 437 residues: CCA-adding enzyme (437 aa).

ATP-binding residues include serine 50 and lysine 53. CTP contacts are provided by serine 50 and lysine 53. 3 residues coordinate Mg(2+): aspartate 61, aspartate 63, and aspartate 112. Residues histidine 135, lysine 155, and tyrosine 164 each contribute to the ATP site. CTP-binding residues include histidine 135, lysine 155, and tyrosine 164.

It belongs to the tRNA nucleotidyltransferase/poly(A) polymerase family. Archaeal CCA-adding enzyme subfamily. As to quaternary structure, homodimer. It depends on Mg(2+) as a cofactor.

The catalysed reaction is a tRNA precursor + 2 CTP + ATP = a tRNA with a 3' CCA end + 3 diphosphate. It catalyses the reaction a tRNA with a 3' CCA end + 2 CTP + ATP = a tRNA with a 3' CCACCA end + 3 diphosphate. Its function is as follows. Catalyzes the addition and repair of the essential 3'-terminal CCA sequence in tRNAs without using a nucleic acid template. Adds these three nucleotides in the order of C, C, and A to the tRNA nucleotide-73, using CTP and ATP as substrates and producing inorganic pyrophosphate. tRNA 3'-terminal CCA addition is required both for tRNA processing and repair. Also involved in tRNA surveillance by mediating tandem CCA addition to generate a CCACCA at the 3' terminus of unstable tRNAs. While stable tRNAs receive only 3'-terminal CCA, unstable tRNAs are marked with CCACCA and rapidly degraded. This is CCA-adding enzyme from Thermoplasma volcanium (strain ATCC 51530 / DSM 4299 / JCM 9571 / NBRC 15438 / GSS1).